The following is a 490-amino-acid chain: Myocilin (490 aa).

The N-terminal stretch at 1–18 (MPAVQLLLLACLLGGVGA) is a signal peptide. A coiled-coil region spans residues 51–170 (GQAMLAIQEL…QEVASLRRGQ (120 aa)). The disordered stretch occupies residues 152-186 (LARRLESSSQEVASLRRGQCPQAHSSSQDVPSGSR). The segment covering 173-182 (QAHSSSQDVP) has biased composition (polar residues). Residues 230 to 489 (GCGELVWVGE…MVSYDIKLSR (260 aa)) enclose the Olfactomedin-like domain. Cys-231 and Cys-419 form a disulfide bridge. 5 residues coordinate Ca(2+): Asp-366, Asn-414, Ala-415, Ile-463, and Asp-464. The Microbody targeting signal signature appears at 488-490 (SRL).

Homodimer (via N-terminus). Can also form higher oligomers. Interacts with OLFM3, FN1, NRCAM, GLDN and NFASC. Interacts (via N-terminus) with MYL2. Interacts with SFRP1, FRZB, FZD7, FZD10, FZD1 and WIF1; regulates Wnt signaling. Interacts with SNTA1; regulates muscle hypertrophy. Interacts with ERBB2 and ERBB3; activates ERBB2-ERBB3 signaling pathway. Interacts with SNCG; affects its secretion and its aggregation. Post-translationally, palmitoylated. In terms of processing, undergoes a calcium-dependent proteolytic cleavage at Gln-212 by CAPN2 in the endoplasmic reticulum. The result is the production of two fragments, one of 35 kDa containing the C-terminal olfactomedin-like domain, and another of 20 kDa containing the N-terminal leucine zipper-like domain. Glycosylated. The myocilin 35 kDa fragment is detected in iris and ciliary body.

The protein resides in the secreted. Its subcellular location is the golgi apparatus. It is found in the cytoplasmic vesicle. It localises to the extracellular space. The protein localises to the extracellular matrix. The protein resides in the extracellular exosome. Its subcellular location is the mitochondrion. It is found in the mitochondrion intermembrane space. It localises to the mitochondrion inner membrane. The protein localises to the mitochondrion outer membrane. The protein resides in the rough endoplasmic reticulum. Its subcellular location is the cell projection. It is found in the cilium. It localises to the endoplasmic reticulum. Secreted glycoprotein regulating the activation of different signaling pathways in adjacent cells to control different processes including cell adhesion, cell-matrix adhesion, cytoskeleton organization and cell migration. Promotes substrate adhesion, spreading and formation of focal contacts. Negatively regulates cell-matrix adhesion and stress fiber assembly through Rho protein signal transduction. Modulates the organization of actin cytoskeleton by stimulating the formation of stress fibers through interactions with components of Wnt signaling pathways. Promotes cell migration through activation of PTK2 and the downstream phosphatidylinositol 3-kinase signaling. Plays a role in bone formation and promotes osteoblast differentiation in a dose-dependent manner through mitogen-activated protein kinase signaling. Mediates myelination in the peripheral nervous system through ERBB2/ERBB3 signaling. Plays a role as a regulator of muscle hypertrophy through the components of dystrophin-associated protein complex. Involved in positive regulation of mitochondrial depolarization. Plays a role in neurite outgrowth. May participate in the obstruction of fluid outflow in the trabecular meshwork. This is Myocilin (MYOC) from Bos taurus (Bovine).